A 109-amino-acid polypeptide reads, in one-letter code: Parvalbumin beta (109 aa).

An N-acetylalanine modification is found at A2. The igE-binding stretch occupies residues 22–41 (AGSFDHKKFFKACGLSGKST). EF-hand domains follow at residues 39–74 (KSTD…FKAG) and 78–109 (LSDA…MIKG). Ca(2+)-binding residues include D52, D54, S56, F58, E60, E63, D91, D93, D95, K97, and E102.

The protein belongs to the parvalbumin family. Post-translationally, the N-terminus is blocked. Expressed in both white and dark muscles (at protein level). About eight and a half times lower expression in the dark muscle than in the white muscle (at protein level).

Functionally, in muscle, parvalbumin is thought to be involved in relaxation after contraction. It binds two calcium ions. The chain is Parvalbumin beta from Scomber japonicus (Chub mackerel).